The primary structure comprises 437 residues: tRNA-2-methylthio-N(6)-dimethylallyladenosine synthase (437 aa).

One can recognise an MTTase N-terminal domain in the interval lysine 2–aspartate 117. The [4Fe-4S] cluster site is built by cysteine 11, cysteine 48, cysteine 80, cysteine 154, cysteine 158, and cysteine 161. Residues arginine 140 to glutamine 372 form the Radical SAM core domain. In terms of domain architecture, TRAM spans lysine 375–valine 437.

This sequence belongs to the methylthiotransferase family. MiaB subfamily. As to quaternary structure, monomer. The cofactor is [4Fe-4S] cluster.

Its subcellular location is the cytoplasm. The catalysed reaction is N(6)-dimethylallyladenosine(37) in tRNA + (sulfur carrier)-SH + AH2 + 2 S-adenosyl-L-methionine = 2-methylsulfanyl-N(6)-dimethylallyladenosine(37) in tRNA + (sulfur carrier)-H + 5'-deoxyadenosine + L-methionine + A + S-adenosyl-L-homocysteine + 2 H(+). Functionally, catalyzes the methylthiolation of N6-(dimethylallyl)adenosine (i(6)A), leading to the formation of 2-methylthio-N6-(dimethylallyl)adenosine (ms(2)i(6)A) at position 37 in tRNAs that read codons beginning with uridine. The chain is tRNA-2-methylthio-N(6)-dimethylallyladenosine synthase from Magnetococcus marinus (strain ATCC BAA-1437 / JCM 17883 / MC-1).